We begin with the raw amino-acid sequence, 1336 residues long: Mating factor M secretion protein mam1 (1336 aa).

Residues 1–29 are disordered; it reads MHIHSDLSLPQFEHASIDPPSYSPQKSSF. The Cytoplasmic segment spans residues 1–91; that stretch reads MHIHSDLSLP…ELAGVSSWSD (91 aa). A helical membrane pass occupies residues 92–112; it reads FFYLFHFSDIPLIFGTLIFTC. Positions 104 to 396 constitute an ABC transmembrane type-1 1 domain; that stretch reads IFGTLIFTCL…ILPAIPDLIK (293 aa). Residues 113 to 153 lie on the Extracellular side of the membrane; sequence LSAALEPLMTWTTGKVFDALSQYATSQITLGKMISLINFNS. The helical transmembrane segment at 154 to 174 threads the bilayer; sequence LLITIFGLASCVFSFGVRFLW. Residues 175 to 250 are Cytoplasmic-facing; the sequence is QYLSAIAGKR…SCLIISFRYS (76 aa). Residues 251 to 271 form a helical membrane-spanning segment; it reads WSLTLVVLASYPIIILVVGFI. The Extracellular segment spans residues 272-778; sequence NSFLSSAYEK…KSIWKVKKLR (507 aa). The region spanning 433 to 668 is the ABC transporter 1 domain; the sequence is FRFDNVSFAY…EDFENNVSID (236 aa). Asparagine 437 and asparagine 454 each carry an N-linked (GlcNAc...) asparagine glycan. Position 469 to 476 (469 to 476) interacts with ATP; sequence GPSGSGKS. Asparagine 536, asparagine 664, and asparagine 697 each carry an N-linked (GlcNAc...) asparagine glycan. The chain crosses the membrane as a helical span at residues 779-799; sequence WFFLLGLLTSLIQGASVPIFA. The region spanning 781-1066 is the ABC transmembrane type-1 2 domain; the sequence is FLLGLLTSLI…CIMSLPNVSA (286 aa). Over 800 to 897 the chain is Cytoplasmic; that stretch reads YVISKCLNLF…ISDMRNMISS (98 aa). Residues 898–918 form a helical membrane-spanning segment; the sequence is LIEEVFIAFTMAIIGIAWSFA. Over 919–1336 the chain is Extracellular; it reads TGWRLAAVLV…KLIHRGEWIE (418 aa). N-linked (GlcNAc...) asparagine glycans are attached at residues asparagine 1011, asparagine 1063, and asparagine 1120. In terms of domain architecture, ABC transporter 2 spans 1099–1331; the sequence is IEFDGVSFAY…HTHFWKLIHR (233 aa). 1135-1142 contacts ATP; it reads GISGSGKS. N-linked (GlcNAc...) asparagine glycans are attached at residues asparagine 1235 and asparagine 1280.

Belongs to the ABC transporter superfamily. Alpha-factor sex pheromone exporter (TC 3.A.1.206) family.

The protein resides in the membrane. Functionally, required in S.pombe M (minus) cells for production of M-factor pheromone. Involved in the transport of the farnesyl-derivation of the M-factor pheromone. The sequence is that of Mating factor M secretion protein mam1 (mam1) from Schizosaccharomyces pombe (strain 972 / ATCC 24843) (Fission yeast).